Consider the following 695-residue polypeptide: Probable glutamine--tRNA ligase (695 aa).

Positions Pro-201–His-211 match the 'HIGH' region motif. ATP is bound by residues Glu-202–Asn-204 and His-208–Ala-214. Residues Asp-234 and Tyr-391 each contribute to the L-glutamine site. Residues Thr-410, Arg-439 to Leu-440, and Leu-447 to Lys-449 contribute to the ATP site. A 'KMSKS' region motif is present at residues Val-446–Arg-450.

This sequence belongs to the class-I aminoacyl-tRNA synthetase family.

The catalysed reaction is tRNA(Gln) + L-glutamine + ATP = L-glutaminyl-tRNA(Gln) + AMP + diphosphate. The protein is Probable glutamine--tRNA ligase of Vairimorpha ceranae (strain BRL01) (Microsporidian parasite).